Consider the following 95-residue polypeptide: Co-chaperonin GroES (95 aa).

The protein belongs to the GroES chaperonin family. As to quaternary structure, heptamer of 7 subunits arranged in a ring. Interacts with the chaperonin GroEL.

The protein resides in the cytoplasm. In terms of biological role, together with the chaperonin GroEL, plays an essential role in assisting protein folding. The GroEL-GroES system forms a nano-cage that allows encapsulation of the non-native substrate proteins and provides a physical environment optimized to promote and accelerate protein folding. GroES binds to the apical surface of the GroEL ring, thereby capping the opening of the GroEL channel. The sequence is that of Co-chaperonin GroES from Pseudoalteromonas translucida (strain TAC 125).